Reading from the N-terminus, the 251-residue chain is Triosephosphate isomerase (251 aa).

9–11 (NWK) lines the substrate pocket. His-93 acts as the Electrophile in catalysis. Glu-163 acts as the Proton acceptor in catalysis. Residues Gly-169, Ser-209, and 230–231 (GG) contribute to the substrate site.

Belongs to the triosephosphate isomerase family. As to quaternary structure, homodimer.

It is found in the cytoplasm. It carries out the reaction D-glyceraldehyde 3-phosphate = dihydroxyacetone phosphate. It participates in carbohydrate biosynthesis; gluconeogenesis. The protein operates within carbohydrate degradation; glycolysis; D-glyceraldehyde 3-phosphate from glycerone phosphate: step 1/1. In terms of biological role, involved in the gluconeogenesis. Catalyzes stereospecifically the conversion of dihydroxyacetone phosphate (DHAP) to D-glyceraldehyde-3-phosphate (G3P). This chain is Triosephosphate isomerase, found in Ruegeria pomeroyi (strain ATCC 700808 / DSM 15171 / DSS-3) (Silicibacter pomeroyi).